Consider the following 380-residue polypeptide: E3 ubiquitin-protein ligase RNF13 (380 aa).

A signal peptide spans 1 to 34 (MLLSIGMLMLSATQVYTILTVQLFAFLNLLPVEA). Over 35–182 (DILAYNFENA…VPELSLPLEY (148 aa)) the chain is Lumenal. Residues 64–160 (LKGFLINSKP…GESSANSLKD (97 aa)) form the PA domain. N-linked (GlcNAc...) asparagine glycosylation occurs at asparagine 88. The helical transmembrane segment at 183–203 (YLIPFLIIVGICLILIVIFMI) threads the bilayer. Over 204-380 (TKFVQDRHRN…EPDYNIANTV (177 aa)) the chain is Cytoplasmic. The RING-type; atypical zinc finger occupies 240–282 (CAICLEEYEDGDKLRILPCSHAYHCKCVDPWLTKTKKTCPVCK). Positions 285-380 (VVPSQGDSDS…EPDYNIANTV (96 aa)) are disordered. The span at 338–356 (SDYEDDDNEETDSSDADNE) shows a compositional bias: acidic residues.

In terms of assembly, interacts with ERN1. Autoubiquitinated.

The protein localises to the endoplasmic reticulum membrane. The protein resides in the late endosome membrane. It localises to the lysosome membrane. Its subcellular location is the nucleus inner membrane. It carries out the reaction S-ubiquitinyl-[E2 ubiquitin-conjugating enzyme]-L-cysteine + [acceptor protein]-L-lysine = [E2 ubiquitin-conjugating enzyme]-L-cysteine + N(6)-ubiquitinyl-[acceptor protein]-L-lysine.. The protein operates within protein modification; protein ubiquitination. Functionally, E3 ubiquitin-protein ligase that regulates cell proliferation. Involved in apoptosis regulation. Mediates ER stress-induced activation of JNK signaling pathway and apoptosis by promoting ERN1 activation and splicing of XBP1 mRNA. Also involved in protein trafficking and localization. The protein is E3 ubiquitin-protein ligase RNF13 (Rnf13) of Rattus norvegicus (Rat).